The following is a 220-amino-acid chain: Nucleolar protein 3 (220 aa).

Gly2 carries N-myristoyl glycine lipidation. A CARD domain is found at Val4–His95. Residues Val20–Glu70 form an essential for interaction with BAX region. Positions Gly111–Ser220 are disordered. Thr149 carries the post-translational modification Phosphothreonine; by CK2. The span at Glu152 to Ser220 shows a compositional bias: acidic residues.

Oligomerizes (via CARD doamin). Interacts (via CARD domain) with CASP2; inhibits CASP2 activity in a phosphorylation-dependent manner. Interacts with CASP8; decreases CASP8 activity in a mitochondria localization- and phosphorylation-dependent manner and this interaction is dissociated by calcium. Interacts with TFPT; translocates NOL3 into the nucleus and negatively regulated TFPT-induced cell death. Interacts directly (via CARD domain) with FAS and FADD (via DED domain); inhibits death-inducing signaling complex (DISC) assembly by inhibiting the increase in FAS-FADD binding induced by FAS activation. Interacts (via CARD domain) with BAX (via a C-terminal 33 residues); inhibits BAX activation and translocation and consequently cytochrome c release from mitochondria. Interacts with PPM1G; may dephosphorylate NOL3. Interacts (via CARD domain) with BBC3 (via BH3 domain); preventing the association of BBC3 with BCL2 and resulting in activation of CASP8. Interacts (via CARD domain) with BAD(via BH3 domain); preventing the association of BAD with BCL2. Interacts directly (via CARD domain) with TNFRSF1A; inhibits TNF-signaling pathway. Phosphorylation at Thr-149 is required for its antiapoptotic effect by blocking death-inducing signaling complex death-inducing signaling complex (DISC) activity through the control of interaction with CASP8. Phosphorylation at Thr-149 results in translocation to mitochondria and this translocation enables the binding to CASP8. Dephosphorylated at Thr-149 by calcineurin; doesn't inhibit the association between FADD and CASP8 and the consequent apoptosis. In terms of processing, polyubiquitinated by MDM2; promoting proteasomal-dependent degradation in response to apoptotic stimuli.

It localises to the cytoplasm. It is found in the mitochondrion. The protein localises to the sarcoplasmic reticulum. The protein resides in the membrane. Functionally, apoptosis repressor that blocks multiple modes of cell death. Inhibits extrinsic apoptotic pathways through two different ways. Firstly by interacting with FAS and FADD upon FAS activation blocking death-inducing signaling complex (DISC) assembly. Secondly by interacting with CASP8 in a mitochondria localization- and phosphorylation-dependent manner, limiting the amount of soluble CASP8 available for DISC-mediated activation. Inhibits intrinsic apoptotic pathway in response to a wide range of stresses, through its interaction with BAX resulting in BAX inactivation, preventing mitochondrial dysfunction and release of pro-apoptotic factors. Inhibits calcium-mediated cell death by functioning as a cytosolic calcium buffer, dissociating its interaction with CASP8 and maintaining calcium homeostasis. Negatively regulates oxidative stress-induced apoptosis by phosphorylation-dependent suppression of the mitochondria-mediated intrinsic pathway, by blocking CASP2 activation and BAX translocation. Negatively regulates hypoxia-induced apoptosis in part by inhibiting the release of cytochrome c from mitochondria in a caspase-independent manner. Also inhibits TNF-induced necrosis by preventing TNF-signaling pathway through TNFRSF1A interaction abrogating the recruitment of RIPK1 to complex I. Finally through its role as apoptosis repressor, promotes vascular remodeling through inhibition of apoptosis and stimulation of proliferation, in response to hypoxia. Inhibits too myoblast differentiation through caspase inhibition. In Mus musculus (Mouse), this protein is Nucleolar protein 3 (Nol3).